A 437-amino-acid chain; its full sequence is MALAGAPAGGPCAPALEALLGAGALRLLDSSQIVIISAAQDASAPPAPTGPAAPAAGPCDPDLLLFATPQAPRPTPSAPRPALGRPPVKRRLDLETDHQYLAESSGPARGRGRHPGKGVKSPGEKSRYETSLNLTTKRFLELLSHSADGVVDLNWAAEVLKVQKRRIYDITNVLEGIQLIAKKSKNHIQWLGSHTTVGVGGRLEGLTQDLRQLQESEQQLDHLMNICTTQLRLLSEDTDSQRLAYVTCQDLRSIADPAEQMVMVIKAPPETQLQAVDSSENFQISLKSKQGPIDVFLCPEETVGGISPGKTPSQEVTSEEENRATDSATIVSPPPSSPPSSLTTDPSQSLLSLEQEPLLSRMGSLRAPVDEDRLSPLVAADSLLEHVREDFSGLLPEEFISLSPPHEALDYHFGLEEGEGIRDLFDCDFGDLTPLDF.

Disordered regions lie at residues 42 to 87 (ASAP…GRPP) and 101 to 128 (LAESSGPARGRGRHPGKGVKSPGEKSRY). The cyclin A:CDK2 binding stretch occupies residues 67–108 (ATPQAPRPTPSAPRPALGRPPVKRRLDLETDHQYLAESSGPA). Residues 89 to 191 (KRRLDLETDH…KKSKNHIQWL (103 aa)) form an interaction with BIRC2/c-IAP1 region. Residues 110–194 (GRGRHPGKGV…KNHIQWLGSH (85 aa)) mediate DNA binding. Residues Lys117, Lys120, and Lys125 each carry the N6-acetyllysine modification. The interval 153–174 (LNWAAEVLKVQKRRIYDITNVL) is leucine-zipper. Positions 158–194 (EVLKVQKRRIYDITNVLEGIQLIAKKSKNHIQWLGSH) match the DEF box motif. Lys185 carries the N6-methyllysine; by SETD7 modification. Residues 192-382 (GSHTTVGVGG…RLSPLVAADS (191 aa)) form a required for interaction with TRIM28 region. Residues 195–284 (TTVGVGGRLE…AVDSSENFQI (90 aa)) are dimerization. The segment at 300-349 (EETVGGISPGKTPSQEVTSEEENRATDSATIVSPPPSSPPSSLTTDPSQS) is disordered. Positions 339–349 (PSSLTTDPSQS) are enriched in low complexity. The residue at position 364 (Ser364) is a Phosphoserine; by CHEK2. The transactivation stretch occupies residues 368 to 437 (PVDEDRLSPL…DFGDLTPLDF (70 aa)). Phosphoserine is present on Ser375. Ser403 bears the Phosphoserine; by GSK3-beta mark. The segment at 409 to 426 (LDYHFGLEEGEGIRDLFD) is RB1 binding. Thr433 is subject to Phosphothreonine; by GSK3-beta.

Belongs to the E2F/DP family. Component of the DRTF1/E2F transcription factor complex. Forms heterodimers with DP family members. The E2F1 complex binds specifically hypophosphorylated RB1, the interaction represses E2F1-driven transcription. During the cell cycle, RB1 becomes phosphorylated in mid-to-late G1 phase, detaches from the DRTF1/E2F complex, rendering E2F transcriptionally active. Viral oncoproteins, notably E1A, T-antigen and HPV E7, are capable of sequestering RB1, thus releasing the active complex. Interacts with TRRAP, which probably mediates its interaction with histone acetyltransferase complexes, leading to transcription activation. Binds TOPBP1 and EAPP. Interacts with ARID3A. Interacts with TRIM28; the interaction inhibits E2F1 acetylation through recruiting HDAC1 and represses its transcriptional activity. Interaction with KAT2B; the interaction acetylates E2F1 enhancing its DNA-binding and transcriptional activity. Interacts with BIRC2/c-IAP1 (via BIR domains). The complex TFDP1:E2F1 interacts with CEBPA; the interaction prevents CEBPA binding to target genes promoters and represses its transcriptional activity. Interacts with RRP1B. Interacts with HCFC1. Interacts with KMT2E; the interaction is probably indirect and is mediated via HCFC1. Interacts with DCAF5 and L3MBTL3; the interaction requires methylation at Lys-185 and is necessary to target E2F1 for ubiquitination by the CRL4-DCAF5 E3 ubiquitin ligase complex. As to quaternary structure, (Microbial infection) Interacts with human cytomegalovirus/HHV-5 protein UL123. In terms of processing, phosphorylated by CDK2 and cyclin A-CDK2 in the S-phase. Phosphorylation at Ser-364 by CHEK2 stabilizes E2F1 upon DNA damage and regulates its effect on transcription and apoptosis. Phosphorylation at Ser-403 by GSK3B promotes interaction with USP11, leading to its deubiquitination and stabilization. Post-translationally, ubiquitinated via 'Lys-63'-linked ubiquitin, leading to its degradation. Deubiquitinated by USP11 following phosphorylation by GSK3B, promoting its stability. Acetylation stimulates DNA-binding. Enhanced under stress conditions such as DNA damage and inhibited by retinoblastoma protein RB1. Regulated by KAP1/TRIM28 which recruits HDAC1 to E2F1 resulting in deacetylation. Acetylated by P/CAF/KAT2B. In terms of processing, methylation at Lys-185 by SETD7 promotes E2F1 ubiquitin-dependent proteasomal degradation.

The protein resides in the nucleus. With respect to regulation, BIRC2/c-IAP1 stimulates its transcriptional activity. In terms of biological role, transcription activator that binds DNA cooperatively with DP proteins through the E2 recognition site, 5'-TTTC[CG]CGC-3' found in the promoter region of a number of genes whose products are involved in cell cycle regulation or in DNA replication. The DRTF1/E2F complex functions in the control of cell-cycle progression from G1 to S phase. E2F1 binds preferentially RB1 in a cell-cycle dependent manner. It can mediate both cell proliferation and TP53/p53-dependent apoptosis. Blocks adipocyte differentiation by binding to specific promoters repressing CEBPA binding to its target gene promoters. Directly activates transcription of PEG10. Positively regulates transcription of RRP1B. The polypeptide is Transcription factor E2F1 (Homo sapiens (Human)).